We begin with the raw amino-acid sequence, 904 residues long: Translation initiation factor IF-2 (904 aa).

3 disordered regions span residues 103–122 (YVKSENEGSGRAAPMTPDEE), 137–252 (NLEE…MVAG), and 267–315 (HLSA…FERP). Positions 137–177 (NLEEQQRLAESDRVRDEAIQRKREEEQAAKDRAEAERKAAE) are enriched in basic and acidic residues. 2 stretches are compositionally biased toward low complexity: residues 178 to 230 (EAAA…AAPA) and 280 to 293 (RGKPTGRPGSSSSR). The 170-residue stretch at 403–572 (SRPPVVTIMG…SLQAEVLELK (170 aa)) folds into the tr-type G domain. Residues 412-419 (GHVDHGKT) are G1. GTP is bound at residue 412 to 419 (GHVDHGKT). The segment at 437-441 (GITQH) is G2. Residues 458 to 461 (DTPG) are G3. Residues 458–462 (DTPGH) and 512–515 (NKID) contribute to the GTP site. The segment at 512–515 (NKID) is G4. Positions 548-550 (SAK) are G5.

It belongs to the TRAFAC class translation factor GTPase superfamily. Classic translation factor GTPase family. IF-2 subfamily.

It is found in the cytoplasm. Functionally, one of the essential components for the initiation of protein synthesis. Protects formylmethionyl-tRNA from spontaneous hydrolysis and promotes its binding to the 30S ribosomal subunits. Also involved in the hydrolysis of GTP during the formation of the 70S ribosomal complex. This chain is Translation initiation factor IF-2, found in Xanthomonas euvesicatoria pv. vesicatoria (strain 85-10) (Xanthomonas campestris pv. vesicatoria).